The sequence spans 358 residues: DNA replication and repair protein RecF (358 aa).

Residue 30 to 37 coordinates ATP; sequence GNNGSGKT.

The protein belongs to the RecF family.

It is found in the cytoplasm. In terms of biological role, the RecF protein is involved in DNA metabolism; it is required for DNA replication and normal SOS inducibility. RecF binds preferentially to single-stranded, linear DNA. It also seems to bind ATP. In Histophilus somni (strain 2336) (Haemophilus somnus), this protein is DNA replication and repair protein RecF.